Reading from the N-terminus, the 521-residue chain is MSSDSLTPKDTIVPEEQTNQLRQPDLDEDSIHYDPEADDLESLETTASYASTSVSAKVYTKKEVNKGTDIESQPHWGENTSSTHDSDKEEDSNEEIESFPEGGFKAWVVTFGCFLGLIACFGLLNSTGVIESHLQDNQLSSESVSTIGWLFSLFLFVCSASCIISGTYFDRNGFRTIMIVGTVFHVAGLFATANSTKYWHFILSFAIVCGFGNGIVLSPLVSVPAHYFFKRRGTALAMATIGGSVGGVVFPIMLRSFFSMKSDTDPTYGFVWGIRTLGFLDLALLTLSIILVKERLPHVIENSKDGESRWRYILRVYILQCFDAKAFLDMKYLFCVLGTVFSELSINSALTYYGSYATSHGISANDAYTLIMIINVCGIPGRWVPGYLSDKFGRFNVAIATLLTLFIVMFVGWLPFGTNLTNMYVISALYGFCSGSVFSLLPVCCGQISKTEEFGKRYSTMYFVVGFGTLVGIPITGAIISIKTTADYQHYIIFCGLATFVSAVCYIISRAYCVGFKWVRF.

2 disordered regions span residues 1-33 (MSSD…SIHY) and 65-96 (NKGT…NEEI). Topologically, residues 1-103 (MSSDSLTPKD…EEIESFPEGG (103 aa)) are cytoplasmic. The helical transmembrane segment at 104-124 (FKAWVVTFGCFLGLIACFGLL) threads the bilayer. Asn-125 carries an N-linked (GlcNAc...) asparagine glycan. Over 125 to 143 (NSTGVIESHLQDNQLSSES) the chain is Extracellular. The helical transmembrane segment at 144-164 (VSTIGWLFSLFLFVCSASCII) threads the bilayer. The Cytoplasmic portion of the chain corresponds to 165–172 (SGTYFDRN). A helical transmembrane segment spans residues 173-193 (GFRTIMIVGTVFHVAGLFATA). N-linked (GlcNAc...) asparagine glycosylation occurs at Asn-194. Residues 194–200 (NSTKYWH) lie on the Extracellular side of the membrane. The helical transmembrane segment at 201 to 221 (FILSFAIVCGFGNGIVLSPLV) threads the bilayer. Residues 222–233 (SVPAHYFFKRRG) are Cytoplasmic-facing. The chain crosses the membrane as a helical span at residues 234–254 (TALAMATIGGSVGGVVFPIML). Residues 255 to 269 (RSFFSMKSDTDPTYG) lie on the Extracellular side of the membrane. Residues 270-290 (FVWGIRTLGFLDLALLTLSII) traverse the membrane as a helical segment. The Cytoplasmic portion of the chain corresponds to 291–325 (LVKERLPHVIENSKDGESRWRYILRVYILQCFDAK). A helical transmembrane segment spans residues 326 to 346 (AFLDMKYLFCVLGTVFSELSI). At 347–367 (NSALTYYGSYATSHGISANDA) the chain is on the extracellular side. Residues 368-388 (YTLIMIINVCGIPGRWVPGYL) form a helical membrane-spanning segment. At 389–396 (SDKFGRFN) the chain is on the cytoplasmic side. Residues 397–417 (VAIATLLTLFIVMFVGWLPFG) form a helical membrane-spanning segment. At 418–422 (TNLTN) the chain is on the extracellular side. N-linked (GlcNAc...) asparagine glycosylation is present at Asn-419. The helical transmembrane segment at 423–443 (MYVISALYGFCSGSVFSLLPV) threads the bilayer. Topologically, residues 444–461 (CCGQISKTEEFGKRYSTM) are cytoplasmic. Residues 462-482 (YFVVGFGTLVGIPITGAIISI) form a helical membrane-spanning segment. The Extracellular portion of the chain corresponds to 483–487 (KTTAD). A helical transmembrane segment spans residues 488 to 508 (YQHYIIFCGLATFVSAVCYII). Residues 509–521 (SRAYCVGFKWVRF) lie on the Cytoplasmic side of the membrane.

The protein belongs to the major facilitator superfamily. Monocarboxylate porter (TC 2.A.1.13) family.

The protein localises to the cell membrane. Its function is as follows. Riboflavin transporter involved in riboflavin (vitamin B2) uptake. Does not act in the transport of monocarboxylic acids across the plasma membrane. In Saccharomyces cerevisiae (strain ATCC 204508 / S288c) (Baker's yeast), this protein is Riboflavin transporter MCH5 (MCH5).